Here is a 779-residue protein sequence, read N- to C-terminus: MDFLDFPALVVDESAALPQPASRLSLASLRLNDDEQEAKFVLPNVSKHDTEFTDLHSKMKHFASISLGEIRPASVSLSKEVAAPISNNIEKPTTTNQLLSKKINSLLNVPNYASYTSDSETKRALQILDANHSDLGLNFNQLVASDFVGTLNRKSLRSKLENSMLNSHSDILSNFQSIARRIKRLSGPLERINNAMQNFKDTTESIDFEFEHVKDRLDQLKARRQVIIKLRDSLTLTQLELDHLQNGTINDLFFQILNKINFIKEKATYLLSNEKTTSAGVALLKTMNNNLTVSNKRIYNYLINFIEEYDTLSRQYGERTIGDESLSNFQTSLIHLSNDVQFFQDFLNRIVGLRSKRLLDDFLSQFDIDNKKLQRPIILSAHDPVRYLGDVLAYVHSMIVNELEFLKSTFKLKSELVTSDSVLKDNMDFIGDLHLKLLNEIFTSLANTIRIRLEQIVRFENNPMLNLDIVQCLSLYQMMLVKNGINESSQLMTSLNDLENLARSKIVSSVTSYLKDLDKNQIAAADLLPPDWFVDYLSKLSQLLNKLEQQNETRILTDDLYDKLILDPINNNLVLNLQNWFPTAKKEKSARIDLLIVQINSFDLVKSKLGPFHSTIFSSDYGKSVFSKLETQYTLCVTKLKETMNSYLFESTGMELYFNLFNMIFPIISVQDELDYDMYLSAVENPIMKLAVIHDNIHEKLNTYLPLAVSDFQDVKLFNLMPPAVEEDIVSTCFGNFIKFYKVFKSVLNKIYPEDEEMIMSTLNFTTNEVSTLLGVEDK.

This sequence belongs to the COG6 family.

The protein localises to the golgi apparatus membrane. Functionally, acts as a component of the peripheral membrane COG complex that is involved in intra-Golgi protein trafficking. COG is located at the cis-Golgi, and regulates tethering of retrograde intra-Golgi vesicles and possibly a number of other membrane trafficking events. This Kluyveromyces lactis (strain ATCC 8585 / CBS 2359 / DSM 70799 / NBRC 1267 / NRRL Y-1140 / WM37) (Yeast) protein is Conserved oligomeric Golgi complex subunit 6 (COG6).